Here is a 497-residue protein sequence, read N- to C-terminus: ATP-dependent RNA helicase CshA (497 aa).

Positions 1–29 (MKFSELGLSDSLLKAIKRSGYEEATPIQE) match the Q motif motif. The 171-residue stretch at 32–202 (IPMVLEGKDV…VQFMSDPETV (171 aa)) folds into the Helicase ATP-binding domain. 45–52 (AQTGTGKT) serves as a coordination point for ATP. The DEAD box signature appears at 150–153 (DEAD). Residues 228–373 (DIMTRLIDVQ…PLKPPTAEEA (146 aa)) form the Helicase C-terminal domain. The disordered stretch occupies residues 425–497 (AASEVPVKIT…SFNIRHRKEN (73 aa)). Positions 448–458 (RNGNRNNSHGG) are enriched in low complexity. Basic residues-rich tracts occupy residues 459–473 (NHYR…QHGS) and 481–497 (KSHS…RKEN).

It belongs to the DEAD box helicase family. CshA subfamily. As to quaternary structure, oligomerizes, may be a member of the RNA degradosome.

It is found in the cytoplasm. It localises to the cell membrane. It catalyses the reaction ATP + H2O = ADP + phosphate + H(+). Functionally, DEAD-box RNA helicase possibly involved in RNA degradation. Unwinds dsRNA in both 5'- and 3'-directions, has RNA-dependent ATPase activity. Over-expression leads to cell aggregation. This Limosilactobacillus reuteri (Lactobacillus reuteri) protein is ATP-dependent RNA helicase CshA.